Reading from the N-terminus, the 107-residue chain is Thiosulfate sulfurtransferase GlpE (107 aa).

The region spanning 17–101 (AAGAARLVDI…GFEAWRREFP (85 aa)) is the Rhodanese domain. Residue cysteine 65 is the Cysteine persulfide intermediate of the active site.

The protein belongs to the GlpE family.

It is found in the cytoplasm. The enzyme catalyses thiosulfate + hydrogen cyanide = thiocyanate + sulfite + 2 H(+). It carries out the reaction thiosulfate + [thioredoxin]-dithiol = [thioredoxin]-disulfide + hydrogen sulfide + sulfite + 2 H(+). Transferase that catalyzes the transfer of sulfur from thiosulfate to thiophilic acceptors such as cyanide or dithiols. May function in a CysM-independent thiosulfate assimilation pathway by catalyzing the conversion of thiosulfate to sulfite, which can then be used for L-cysteine biosynthesis. The protein is Thiosulfate sulfurtransferase GlpE of Aeromonas hydrophila subsp. hydrophila (strain ATCC 7966 / DSM 30187 / BCRC 13018 / CCUG 14551 / JCM 1027 / KCTC 2358 / NCIMB 9240 / NCTC 8049).